A 1171-amino-acid chain; its full sequence is ATP-dependent helicase/deoxyribonuclease subunit B (1171 aa).

Residues 1–287 (MSLRFVIGRA…IPLMEQPRFH (287 aa)) form the UvrD-like helicase ATP-binding domain. Position 8–15 (8–15 (GRAGSGKS)) interacts with ATP. The region spanning 281-587 (MEQPRFHSPA…QFANIPPSLD (307 aa)) is the UvrD-like helicase C-terminal domain. 4 residues coordinate [4Fe-4S] cluster: C805, C1129, C1132, and C1138.

It belongs to the helicase family. AddB/RexB type 1 subfamily. In terms of assembly, heterodimer of AddA and AddB. Mg(2+) is required as a cofactor. It depends on [4Fe-4S] cluster as a cofactor.

Its function is as follows. The heterodimer acts as both an ATP-dependent DNA helicase and an ATP-dependent, dual-direction single-stranded exonuclease. Recognizes the chi site generating a DNA molecule suitable for the initiation of homologous recombination. The AddB subunit has 5' -&gt; 3' nuclease activity but not helicase activity. The chain is ATP-dependent helicase/deoxyribonuclease subunit B from Bacillus cereus (strain G9842).